Reading from the N-terminus, the 476-residue chain is Probable coniferyl aldehyde dehydrogenase (476 aa).

Residues Glu225 and Cys259 contribute to the active site.

It belongs to the aldehyde dehydrogenase family. As to quaternary structure, homodimer.

The enzyme catalyses (E)-coniferaldehyde + NADP(+) + H2O = (E)-ferulate + NADPH + 2 H(+). It carries out the reaction (E)-coniferaldehyde + NAD(+) + H2O = (E)-ferulate + NADH + 2 H(+). This is Probable coniferyl aldehyde dehydrogenase (calB) from Pseudomonas aeruginosa (strain ATCC 15692 / DSM 22644 / CIP 104116 / JCM 14847 / LMG 12228 / 1C / PRS 101 / PAO1).